The sequence spans 245 residues: NLP effector protein Pc118551 (245 aa).

Residues 1–19 (MNLRAFLLSAVAALVAVQA) form the signal peptide. Positions 121 to 127 (QRRHLWE) match the Hepta-peptide GHRHDWE motif motif. N-linked (GlcNAc...) asparagine glycosylation occurs at Asn-140.

It belongs to the Necrosis inducing protein (NPP1) family.

The protein resides in the secreted. Functionally, secreted effector that contributes strongly to virulence during infection by P.capsici. The protein is NLP effector protein Pc118551 of Phytophthora capsici.